We begin with the raw amino-acid sequence, 100 residues long: Small ribosomal subunit protein uS14c (100 aa).

The segment at 1–31 (MARKSLIQREKKRQKLEQKYHSIRRSSKKEI) is disordered.

This sequence belongs to the universal ribosomal protein uS14 family. Part of the 30S ribosomal subunit.

It is found in the plastid. The protein resides in the chloroplast. Functionally, binds 16S rRNA, required for the assembly of 30S particles. The chain is Small ribosomal subunit protein uS14c from Nicotiana tomentosiformis (Tobacco).